A 287-amino-acid polypeptide reads, in one-letter code: Pyridoxal 5'-phosphate synthase subunit PdxS (287 aa).

Aspartate 21 contributes to the D-ribose 5-phosphate binding site. Lysine 78 serves as the catalytic Schiff-base intermediate with D-ribose 5-phosphate. Glycine 150 contacts D-ribose 5-phosphate. A D-glyceraldehyde 3-phosphate-binding site is contributed by arginine 162. D-ribose 5-phosphate contacts are provided by residues glycine 211 and 232–233 (GS).

It belongs to the PdxS/SNZ family. As to quaternary structure, in the presence of PdxT, forms a dodecamer of heterodimers.

It carries out the reaction aldehydo-D-ribose 5-phosphate + D-glyceraldehyde 3-phosphate + L-glutamine = pyridoxal 5'-phosphate + L-glutamate + phosphate + 3 H2O + H(+). The protein operates within cofactor biosynthesis; pyridoxal 5'-phosphate biosynthesis. Catalyzes the formation of pyridoxal 5'-phosphate from ribose 5-phosphate (RBP), glyceraldehyde 3-phosphate (G3P) and ammonia. The ammonia is provided by the PdxT subunit. Can also use ribulose 5-phosphate and dihydroxyacetone phosphate as substrates, resulting from enzyme-catalyzed isomerization of RBP and G3P, respectively. In Tropheryma whipplei (strain Twist) (Whipple's bacillus), this protein is Pyridoxal 5'-phosphate synthase subunit PdxS.